A 79-amino-acid chain; its full sequence is MSRLGIMVLTLLLLVFIVTSHQDAGEKQATHRGAINFRWRRSLIRRTATEECEEYCEDEEKTCCGLEDGEPVCATTCLG.

A signal peptide spans 1–20 (MSRLGIMVLTLLLLVFIVTS). A propeptide spanning residues 21-44 (HQDAGEKQATHRGAINFRWRRSLI) is cleaved from the precursor. Disulfide bonds link Cys52/Cys64, Cys56/Cys73, and Cys63/Cys77. Leucine amide is present on Leu78.

The protein belongs to the conotoxin O3 superfamily. As to expression, expressed by the venom duct.

The protein localises to the secreted. The protein is Conotoxin ArMSGL-021 of Conus arenatus (Sand-dusted cone).